We begin with the raw amino-acid sequence, 133 residues long: C-C motif chemokine 21a (133 aa).

Residues 1–23 (MAQMMTLSLLSLVLALCIPWTQG) form the signal peptide. 3 disulfide bridges follow: cysteine 31–cysteine 57, cysteine 32–cysteine 75, and cysteine 103–cysteine 122. The tract at residues 86 to 133 (LMRRLDQPPAPGKQSPGCRKNRGTSKSGKKGKGSKGCKRTEQTQPSRG) is disordered. A C-terminal basic extension region spans residues 98–133 (KQSPGCRKNRGTSKSGKKGKGSKGCKRTEQTQPSRG). The segment covering 104–122 (RKNRGTSKSGKKGKGSKGC) has biased composition (basic residues).

This sequence belongs to the intercrine beta (chemokine CC) family. Binds to CCR7 and to CXCR3. Interacts with PDPN; relocalizes PDPN to the basolateral membrane. Interacts with GPR174. In terms of tissue distribution, expressed strongly in lung, spleen, thymus, peripheral and mesentric lymph nodes. Also expressed in the testis, kidney, liver, and heart.

The protein localises to the secreted. Functionally, inhibits hemopoiesis and stimulates chemotaxis. Chemotactic in vitro for thymocytes and activated T-cells, but not for B-cells, macrophages, or neutrophils. Potent mesangial cell chemoattractant. Shows preferential activity towards naive T-cells. May play a role in mediating homing of lymphocytes to secondary lymphoid organs. In Mus musculus (Mouse), this protein is C-C motif chemokine 21a (Ccl21a).